Consider the following 499-residue polypeptide: Putative antiporter subunit mnhD2 (499 aa).

14 consecutive transmembrane segments (helical) span residues 3-23, 32-52, 78-98, 108-128, 130-150, 161-181, 206-226, 240-260, 273-293, 308-328, 330-350, 368-388, 403-423, and 450-470; these read SNLLVLPILLPLLCALVLVFT, ILYIGTMSVNTVISLCLLIYV, LSLVMVTVASFVVTLIMSYGF, YYLPTFILFLTTGVIGSFLTS, LFNLYVMFEIMLLASFVLVTL, IIYVVLNIVGSWLFLLGIGLL, IIIISIVFIVAFGSKAALVLF, LAALFAALMTKVGAYALIRFF, PLLVFMSCITMLIGAFGVIAY, IGFVILGLGSNTFAGVHGAIF, LANDIIVKTMLFFIIGSLVYM, FFGVAFVVMIFAIGGVPPFSG, GNFIGLALMIITSLLAMYSLF, and TILGILVAVVLAMGIAAPVVM.

This sequence belongs to the CPA3 antiporters (TC 2.A.63) subunit D family. In terms of assembly, may form a heterooligomeric complex that consists of seven subunits: mnhA2, mnhB2, mnhC2, mnhD2, mnhE2, mnhF2 and mnhG2.

The protein localises to the cell membrane. The sequence is that of Putative antiporter subunit mnhD2 (mnhD2) from Staphylococcus haemolyticus (strain JCSC1435).